Here is a 958-residue protein sequence, read N- to C-terminus: Atromentin synthetase greA (958 aa).

Positions 60-465 (SIQTKTFSAF…SGRIKDTVIV (406 aa)) are adenylation (A) domain. A Carrier domain is found at 597–675 (APSTETEKAL…SLANYVNALL (79 aa)). The thiolation and peptide carrier (T) domain stretch occupies residues 602–672 (TEKALAKIYA…VVSSLANYVN (71 aa)). At S634 the chain carries O-(pantetheine 4'-phosphoryl)serine. Positions 698-946 (PIFFVHPGVG…MDFDHVPQFQ (249 aa)) are thioesterase (TE) domain.

Belongs to the ATP-dependent AMP-binding enzyme family.

It participates in secondary metabolite biosynthesis. In terms of biological role, an L-tyrosine:2-oxoglutarate aminotransferase and atromentin synthetase greA catalyze consecutive steps to turn over L-tyrosine into atromentin, which represents the generic precursor molecule for the entire terphenylquinone and pulvinic acid family of pigments, which are widely distributed secondary metabolites in homobasidiomycetes. The first step catalyzed by the aminotransferase converts L-tyrosine in to 4-hydroxyphenylpyruvate (4-HPP). Adenylation of two 4-HPP monomers by the greA adenylation (A) domain, covalent tethering of the monomers as a thioester and oxoester onto the greA thiolation (T) and thioesterase (TE) domains, respectively, and symmetric C-C-bond formation between two monomers catalyzed by the greA TE domain leads to atromentin. This chain is Atromentin synthetase greA (greA), found in Suillus grevillei (Larch bolete).